The chain runs to 238 residues: Sugar fermentation stimulation protein homolog (238 aa).

It belongs to the SfsA family.

The chain is Sugar fermentation stimulation protein homolog from Pseudoalteromonas translucida (strain TAC 125).